Consider the following 387-residue polypeptide: O-methyltransferase lepI (387 aa).

135-148 (FENLWPVLMALPDF) is a substrate binding site. The substrate binding stretch occupies residues 175–195 (CFHWLATQPTRIANFKVLLTD). S-adenosyl-L-methionine contacts are provided by residues 227 to 228 (GG), Asp-252, 275 to 276 (NF), and Arg-291.

This sequence belongs to the class I-like SAM-binding methyltransferase superfamily. Cation-independent O-methyltransferase family.

O-methyltransferase; part of the gene cluster 23 that mediates the biosynthesis of a family of 2-pyridones known as leporins. The hybrid PKS-NRPS synthetase lepA and the enoyl reductase lepG are responsible for fusion of phenylalanine with a hexaketide and subsequent release of the stable tetramic acid precursor, pre-leporin C. Because lepA lacks a designated enoylreductase (ER) domain, the required activity is provided the enoyl reductase lepG. It is possible that the dehydrogenase lepF also participates in production of pre-leporin C. Cytochrome P450 monooxygenase lepH is then required for the ring expansion step to yield leporin C. Leporin C is then presumably further oxidized by the N-hydroxylase lepD to form leporin B. LepI may possess a function in biosynthesis upstream of lepA. Leporin B is further oxidized in the presence of ferric ion to give the leporin B trimer-iron chelate, but whether or not this reaction is catalyzed by an enzyme in the pathway or by ferric ion is not determined yet. The protein is O-methyltransferase lepI of Aspergillus flavus (strain ATCC 200026 / FGSC A1120 / IAM 13836 / NRRL 3357 / JCM 12722 / SRRC 167).